Consider the following 113-residue polypeptide: Beta-microseminoprotein (113 aa).

An N-terminal signal peptide occupies residues 1–20 (MKARLGSLLVLATLVTASNA). Intrachain disulfides connect Cys-22–Cys-69, Cys-38–Cys-61, Cys-56–Cys-92, Cys-59–Cys-68, and Cys-83–Cys-106.

Belongs to the beta-microseminoprotein family. Homodimer; Interacts with PI16.

It is found in the secreted. This chain is Beta-microseminoprotein (Msmb), found in Rattus norvegicus (Rat).